Reading from the N-terminus, the 438-residue chain is CBL-interacting protein kinase 32 (438 aa).

The region spanning 13–268 (YELGRTIGEG…IPEILEDEWF (256 aa)) is the Protein kinase domain. Residues 19–27 (IGEGTFAKV) and lysine 42 each bind ATP. Catalysis depends on aspartate 136, which acts as the Proton acceptor. Residues 154-183 (DFGLSALSQQIKDDGLLHTTCGTPNYVAPE) are activation loop. The NAF domain maps to 305-329 (EEPEALNAFELISMSAGLNLGNLFD). The segment at 335 to 364 (KRETRFTSKCPPKEIVRKIEEAAKPLGFDV) is PPI.

Belongs to the protein kinase superfamily. CAMK Ser/Thr protein kinase family. SNF1 subfamily. Mn(2+) is required as a cofactor.

It carries out the reaction L-seryl-[protein] + ATP = O-phospho-L-seryl-[protein] + ADP + H(+). The catalysed reaction is L-threonyl-[protein] + ATP = O-phospho-L-threonyl-[protein] + ADP + H(+). Its function is as follows. CIPK serine-threonine protein kinases interact with CBL proteins. Binding of a CBL protein to the regulatory NAF domain of CIPK protein lead to the activation of the kinase in a calcium-dependent manner. The polypeptide is CBL-interacting protein kinase 32 (CIPK32) (Oryza sativa subsp. japonica (Rice)).